The sequence spans 239 residues: RING finger protein 151 (239 aa).

The RING-type zinc finger occupies Cys-20 to Arg-58. Residues Glu-101–Glu-156 form a TRAF-type zinc finger.

In terms of assembly, interacts with DTNBP1. In terms of tissue distribution, expressed in testis. Expressed in round spermatids of the stages VII-VIII semniniferous tubules. Expressed in elongating spermatids of stages VIII-IX seminiferous tubules (at protein level).

The protein localises to the cytoplasm. It is found in the nucleus. Its function is as follows. May be involved in acrosome formation of spermatids. The polypeptide is RING finger protein 151 (Rnf151) (Mus musculus (Mouse)).